Here is a 98-residue protein sequence, read N- to C-terminus: MAKEPTQNVQDVFLNHVRRSKTPVTVFLVNGVKLQGIITWFDNFSVLLRRDGHTQLVYKHAISTVMPATPVVLFDPSRTEGATVDLTEKDLAGDADLL.

The Sm domain maps to 11 to 71 (DVFLNHVRRS…ISTVMPATPV (61 aa)).

The protein belongs to the Hfq family. Homohexamer.

Its function is as follows. RNA chaperone that binds small regulatory RNA (sRNAs) and mRNAs to facilitate mRNA translational regulation in response to envelope stress, environmental stress and changes in metabolite concentrations. Also binds with high specificity to tRNAs. This is RNA-binding protein Hfq from Gluconacetobacter diazotrophicus (strain ATCC 49037 / DSM 5601 / CCUG 37298 / CIP 103539 / LMG 7603 / PAl5).